Here is a 586-residue protein sequence, read N- to C-terminus: uncharacterized protein (586 aa).

The 284-residue stretch at 29–312 (YGIAIGSMVV…LARMRISLES (284 aa)) folds into the ABC transmembrane type-1 domain. Helical transmembrane passes span 30-50 (GIAI…AWIM), 66-86 (VFGV…ATYV), 162-184 (MVIQ…ILGV), and 256-276 (IMET…GVLV). Positions 346-580 (IRFKDVNFSY…DGVYRRLYEL (235 aa)) constitute an ABC transporter domain. Residue 379–386 (GPSGAGKS) coordinates ATP.

It belongs to the ABC transporter superfamily.

The protein localises to the cell membrane. This is an uncharacterized protein from Sinorhizobium fredii (strain NBRC 101917 / NGR234).